A 413-amino-acid chain; its full sequence is Inactive serine protease 35 (413 aa).

The N-terminal stretch at 1-16 (MENMLLWLIFFTPGWT) is a signal peptide. N-linked (GlcNAc...) asparagine glycosylation occurs at asparagine 90. In terms of domain architecture, Peptidase S1 spans 124-408 (VYGTDSRFSI…ICLWIHGNDA (285 aa)). A disulfide bridge links cysteine 154 with cysteine 170. Basic residues predominate over residues 191–207 (MRNKSGGKKRRGSKRSR). Residues 191-250 (MRNKSGGKKRRGSKRSRREASGGDQREGTREHLRERAKGGRRRKKSGRGQRIAEGRPSFQ) form a disordered region. Over residues 208-228 (REASGGDQREGTREHLRERAK) the composition is skewed to basic and acidic residues. Positions 229–238 (GGRRRKKSGR) are enriched in basic residues.

Belongs to the peptidase S1 family.

The protein resides in the secreted. The chain is Inactive serine protease 35 (PRSS35) from Homo sapiens (Human).